The following is a 154-amino-acid chain: MSPAKVDVTKKADPKAKALKAAKAVKSGQIVKKPAKKIRTKVTFHRPKTLTVPRKPKYPKISATPRNKLDHYQILKYPLTTESAMKKIEDNNTLVFIVDIRADKKKIKDAVKKMYDIQTKKVNTLIRPDGTKKAYVRLTPDYDALDVANKIGII.

It belongs to the universal ribosomal protein uL23 family.

In terms of biological role, binds to a specific region on the 26S rRNA. This chain is Large ribosomal subunit protein uL23y (RPL23AB), found in Arabidopsis thaliana (Mouse-ear cress).